The following is a 146-amino-acid chain: Probable flagellum biosynthesis repressor protein FlbT 1 (146 aa).

This sequence belongs to the FlbT family.

Functionally, has a post-transcriptional repressor function in flagellum biogenesis. Associates with the 5'-UTR of fljK mRNA and promotes its degradation. This Bradyrhizobium diazoefficiens (strain JCM 10833 / BCRC 13528 / IAM 13628 / NBRC 14792 / USDA 110) protein is Probable flagellum biosynthesis repressor protein FlbT 1.